Consider the following 151-residue polypeptide: Large ribosomal subunit protein uL15 (151 aa).

Residues 1–45 (MNLSSLKPVKGSTKTCKRVGRGQGSGCGGTSTRGHKGQKSRSGYS) form a disordered region. Positions 21-31 (RGQGSGCGGTS) are enriched in gly residues.

The protein belongs to the universal ribosomal protein uL15 family. Part of the 50S ribosomal subunit.

Binds to the 23S rRNA. The chain is Large ribosomal subunit protein uL15 from Azobacteroides pseudotrichonymphae genomovar. CFP2.